The primary structure comprises 568 residues: Protein downstream neighbor of son homolog (568 aa).

Disordered regions lie at residues 28–48 and 311–355; these read NKLA…QVDE and MPLK…DDDE. A compositionally biased stretch (polar residues) spans 315 to 335; the sequence is SDNSGNAHDNSFNEESTTTSL.

It belongs to the DONSON family. In terms of tissue distribution, expression peaks during late G1 and S phase (at protein level).

It localises to the nucleus. Functionally, essential for DNA amplification in the ovary and required for cell proliferation during development. The chain is Protein downstream neighbor of son homolog (hd) from Drosophila melanogaster (Fruit fly).